A 207-amino-acid polypeptide reads, in one-letter code: Shikimate kinase (207 aa).

Position 32–37 (32–37 (GVGKST)) interacts with ATP. Serine 36 contributes to the Mg(2+) binding site. Aspartate 54, arginine 78, and glycine 100 together coordinate substrate. Arginine 138 lines the ATP pocket. Arginine 157 contacts substrate.

It belongs to the shikimate kinase family. In terms of assembly, monomer. Mg(2+) is required as a cofactor.

It localises to the cytoplasm. It catalyses the reaction shikimate + ATP = 3-phosphoshikimate + ADP + H(+). The protein operates within metabolic intermediate biosynthesis; chorismate biosynthesis; chorismate from D-erythrose 4-phosphate and phosphoenolpyruvate: step 5/7. Functionally, catalyzes the specific phosphorylation of the 3-hydroxyl group of shikimic acid using ATP as a cosubstrate. The chain is Shikimate kinase from Bradyrhizobium diazoefficiens (strain JCM 10833 / BCRC 13528 / IAM 13628 / NBRC 14792 / USDA 110).